The chain runs to 2776 residues: Microtubule-associated protein 1A (2776 aa).

Phosphoserine is present on residues serine 114, serine 117, serine 118, serine 121, and serine 155. Tyrosine 177 bears the Phosphotyrosine mark. A disordered region spans residues 310 to 331 (PSKIKHRADSKESLKAAPKTAM). 2 positions are modified to phosphoserine: serine 319 and serine 322. Repeat unit 1 spans residues 336–338 (KRE). The interval 336-541 (KREEVLEEGA…TQDFEELKRE (206 aa)) is 11 X 3 AA approximate repeats of K-K-[DE]. The span at 345–390 (AKEARSELAKELAKSEKKAKEPSEKPPEKPSKPERVRTESSEALKA) shows a compositional bias: basic and acidic residues. 8 disordered regions span residues 345-678 (AKEA…KAES), 738-809 (TIPG…TELT), 846-1076 (EDQS…AGGQ), 1094-1210 (ETGE…ESLG), 1223-1651 (EKGP…SPEQ), 1685-1729 (DGQG…FKDF), 1744-1848 (LAES…APFS), and 1866-2648 (AELE…NGLK). Position 384 is a phosphoserine (serine 384). Residues 391 to 406 (EKRKLIKDKVGKKHLK) are compositionally biased toward basic residues. 2 stretches are compositionally biased toward basic and acidic residues: residues 407–464 (EKIS…KPDL) and 484–500 (LKVDKGRAARGEKELSS). 9 consecutive repeat copies span residues 415–417 (KRD), 420–422 (KKE), 424–426 (KKE), 427–429 (RKE), 431–433 (KKE), 436–438 (RKE), 440–442 (KKD), 444–446 (KKD), and 449–451 (RKD). A Phosphothreonine modification is found at threonine 504. 2 positions are modified to phosphoserine: serine 526 and serine 527. Over residues 536–556 (EELKREERGLLAEPRDTELGE) the composition is skewed to basic and acidic residues. Residues 539 to 541 (KRE) form repeat 11. Positions 567–579 (GRPSTAIQVTQPP) are enriched in polar residues. The span at 587 to 631 (QVEREKEVVPDFPEDKGSKNRAPDSGAEVEREKETWEERKPREAE) shows a compositional bias: basic and acidic residues. Phosphoserine is present on residues serine 604 and serine 611. The residue at position 633 (threonine 633) is a Phosphothreonine. A compositionally biased stretch (basic and acidic residues) spans 640–667 (AREESEPEVKEDVIEKAELEEMEEVHPS). A phosphoserine mark is found at serine 644, serine 667, serine 678, and serine 786. Composition is skewed to polar residues over residues 785-800 (ASQSAESAVPASSSKT), 846-859 (EDQSVASLTAPQTE), and 870-882 (TVTSIPSSRTEAT). Serine 873, serine 876, serine 877, and serine 890 each carry phosphoserine. Threonine 893 is subject to Phosphothreonine. Phosphoserine is present on residues serine 895, serine 899, and serine 908. Polar residues predominate over residues 944-954 (VTTSEKLSSQY). A phosphoserine mark is found at serine 981, serine 991, serine 999, serine 1008, serine 1014, serine 1023, and serine 1062. A Phosphothreonine modification is found at threonine 1068. A compositionally biased stretch (low complexity) spans 1096 to 1105 (GEAGAASGAG). The span at 1112-1124 (RTQEPAEPQKDEL) shows a compositional bias: basic and acidic residues. Serine 1131, serine 1133, serine 1147, serine 1159, serine 1177, serine 1187, serine 1190, serine 1196, serine 1205, and serine 1208 each carry phosphoserine. Over residues 1179–1189 (EDTQSLSFSEE) the composition is skewed to polar residues. A compositionally biased stretch (polar residues) spans 1197–1210 (LDISSKQLSPESLG). The segment covering 1223-1234 (EKGPLVKAEDNS) has biased composition (basic and acidic residues). A phosphoserine mark is found at serine 1251, serine 1289, serine 1310, serine 1313, and serine 1316. Positions 1302–1317 (TSDSSLTKSPESLSSP) are enriched in low complexity. 6 stretches are compositionally biased toward basic and acidic residues: residues 1332-1350 (GSEDRATEQKEKELERKSE), 1370-1384 (SVMHQKDEALDEENK), 1391-1435 (KTSE…KALE), 1449-1488 (PRARAQEHRDLEQKDEHLELRDKTPEEKDKVLVLEDRAPE), 1499-1541 (RAPE…DQDN), and 1549-1599 (GTLK…EKTR). 3 positions are modified to phosphoserine: serine 1516, serine 1580, and serine 1606. Positions 1609–1625 (EEGKAREQEEKYWKEQD) are enriched in basic and acidic residues. Serine 1634 and serine 1648 each carry phosphoserine. Over residues 1709 to 1718 (QEITPLQHTP) the composition is skewed to polar residues. Phosphoserine occurs at positions 1720, 1747, 1762, 1768, and 1772. Phosphothreonine is present on threonine 1777. Residues serine 1783 and serine 1789 each carry the phosphoserine modification. A compositionally biased stretch (polar residues) spans 1794–1808 (TKSTPPTRNEPTTPS). Residues 1823-1844 (LPPAPLSPAPAPPTPAPDPHAP) are compositionally biased toward pro residues. Over residues 1878 to 1890 (KDYRKAEGEREGE) the composition is skewed to basic and acidic residues. Phosphoserine is present on serine 1902. Basic and acidic residues-rich tracts occupy residues 1907-1935 (EVTESHTTRDAEQTEPEQREPTPYPDERS) and 1972-1988 (STKEEAAGRNKSAEKEL). Position 1928 is a phosphothreonine (threonine 1928). Over residues 1990–2006 (SAVSPPNLHSDTPTFSY) the composition is skewed to polar residues. Serine 1993 carries the phosphoserine modification. A compositionally biased stretch (pro residues) spans 2013–2039 (TIPPRQEPEPGPNVEPSFTPPAVPPRA). A Phosphothreonine modification is found at threonine 2031. The segment covering 2042–2058 (SLSQDPSPPLNGSTTSC) has biased composition (polar residues). Phosphoserine is present on residues serine 2048 and serine 2082. A compositionally biased stretch (basic and acidic residues) spans 2060–2096 (PDRRTPSPKEAGRSHWDDGTNDSDLEKGAREQPEKET). Residues 2149–2158 (PAPPQLPSPA) are compositionally biased toward pro residues. Phosphoserine is present on residues serine 2209, serine 2226, serine 2230, serine 2233, and serine 2234. Polar residues predominate over residues 2231 to 2242 (EGSSSEATTPVI). Positions 2279 to 2292 (PLSPAPLASRDLAP) are enriched in low complexity. Residues 2355-2367 (AEKEEAEALHAWE) are compositionally biased toward basic and acidic residues. Phosphoserine is present on serine 2425. The segment covering 2478–2490 (SASDSGSSQSDSD) has biased composition (low complexity). Positions 2535–2551 (DPPPAPLPDPRPPPPRP) are enriched in pro residues. Basic and acidic residues predominate over residues 2566–2576 (GRVERLREKVQ). Phosphoserine occurs at positions 2623 and 2637.

This sequence belongs to the MAP1 family. In terms of assembly, 3 different light chains, LC1 (a cleavage product of MAP1B), LC2 (a cleavage product of MAP1A) and LC3 (produced by one of the MAP1LC3 genes), can associate with the MAP1A or MAP1B heavy chains. Interacts with guanylate kinase-like domain of DLG1, DLG2 and DLG4. Binds to CSNK1D. Interacts with TIAM2. Interacts with ELAVL4. Phosphorylated by CSNK1D. Post-translationally, LC2 is generated from MAP1A by proteolytic processing. It is free to associate with both MAP1A and MAP1B. As to expression, both isoforms highly expressed in brain, and to a lesser extent in embryo. Isoform 1 is also expressed at a low level in other tissues including heart and muscle.

It is found in the cytoplasm. The protein localises to the cytoskeleton. Functionally, structural protein involved in the filamentous cross-bridging between microtubules and other skeletal elements. The protein is Microtubule-associated protein 1A (Map1a) of Mus musculus (Mouse).